We begin with the raw amino-acid sequence, 393 residues long: Formate-dependent phosphoribosylglycinamide formyltransferase (393 aa).

N(1)-(5-phospho-beta-D-ribosyl)glycinamide-binding positions include Glu-17 to Leu-18 and Glu-77. ATP-binding positions include Arg-109, Lys-150, Ser-155–Gln-160, Glu-190–Leu-193, and Glu-198. Positions Asp-114–Leu-304 constitute an ATP-grasp domain. Residues Glu-263 and Glu-275 each coordinate Mg(2+). Residues Asp-282, Lys-354, and Arg-361–Arg-362 contribute to the N(1)-(5-phospho-beta-D-ribosyl)glycinamide site.

It belongs to the PurK/PurT family. As to quaternary structure, homodimer.

The catalysed reaction is N(1)-(5-phospho-beta-D-ribosyl)glycinamide + formate + ATP = N(2)-formyl-N(1)-(5-phospho-beta-D-ribosyl)glycinamide + ADP + phosphate + H(+). The protein operates within purine metabolism; IMP biosynthesis via de novo pathway; N(2)-formyl-N(1)-(5-phospho-D-ribosyl)glycinamide from N(1)-(5-phospho-D-ribosyl)glycinamide (formate route): step 1/1. In terms of biological role, involved in the de novo purine biosynthesis. Catalyzes the transfer of formate to 5-phospho-ribosyl-glycinamide (GAR), producing 5-phospho-ribosyl-N-formylglycinamide (FGAR). Formate is provided by PurU via hydrolysis of 10-formyl-tetrahydrofolate. This chain is Formate-dependent phosphoribosylglycinamide formyltransferase, found in Synechococcus sp. (strain RCC307).